A 480-amino-acid polypeptide reads, in one-letter code: Siroheme synthase 2 (480 aa).

Residues 1-202 (MDYLPMFARL…QDWQSAETWL (202 aa)) form a precorrin-2 dehydrogenase /sirohydrochlorin ferrochelatase region. Residues 22–23 (EV) and 43–44 (PE) contribute to the NAD(+) site. Residue Ser-126 is modified to Phosphoserine. Residues 214-480 (GEVVLVGAGP…GCDLKLVNLA (267 aa)) form a uroporphyrinogen-III C-methyltransferase region. Residue Pro-223 participates in S-adenosyl-L-methionine binding. Asp-246 serves as the catalytic Proton acceptor. Residue Lys-268 is the Proton donor of the active site. S-adenosyl-L-methionine contacts are provided by residues 299-301 (GGD), 329-330 (TA), Met-381, and Gly-410.

It in the N-terminal section; belongs to the precorrin-2 dehydrogenase / sirohydrochlorin ferrochelatase family. This sequence in the C-terminal section; belongs to the precorrin methyltransferase family.

The enzyme catalyses uroporphyrinogen III + 2 S-adenosyl-L-methionine = precorrin-2 + 2 S-adenosyl-L-homocysteine + H(+). It catalyses the reaction precorrin-2 + NAD(+) = sirohydrochlorin + NADH + 2 H(+). It carries out the reaction siroheme + 2 H(+) = sirohydrochlorin + Fe(2+). The protein operates within cofactor biosynthesis; adenosylcobalamin biosynthesis; precorrin-2 from uroporphyrinogen III: step 1/1. It functions in the pathway cofactor biosynthesis; adenosylcobalamin biosynthesis; sirohydrochlorin from precorrin-2: step 1/1. It participates in porphyrin-containing compound metabolism; siroheme biosynthesis; precorrin-2 from uroporphyrinogen III: step 1/1. Its pathway is porphyrin-containing compound metabolism; siroheme biosynthesis; siroheme from sirohydrochlorin: step 1/1. The protein operates within porphyrin-containing compound metabolism; siroheme biosynthesis; sirohydrochlorin from precorrin-2: step 1/1. Multifunctional enzyme that catalyzes the SAM-dependent methylations of uroporphyrinogen III at position C-2 and C-7 to form precorrin-2 via precorrin-1. Then it catalyzes the NAD-dependent ring dehydrogenation of precorrin-2 to yield sirohydrochlorin. Finally, it catalyzes the ferrochelation of sirohydrochlorin to yield siroheme. This chain is Siroheme synthase 2, found in Aeromonas salmonicida (strain A449).